A 215-amino-acid polypeptide reads, in one-letter code: 3,4-dihydroxy-2-butanone 4-phosphate synthase (215 aa).

D-ribulose 5-phosphate-binding positions include 37–38, Asp-42, 150–154, and Glu-175; these read RE and RRGHT. Residue Glu-38 participates in Mg(2+) binding. A Mg(2+)-binding site is contributed by His-153.

The protein belongs to the DHBP synthase family. As to quaternary structure, homodimer. The cofactor is Mg(2+). Mn(2+) is required as a cofactor.

The enzyme catalyses D-ribulose 5-phosphate = (2S)-2-hydroxy-3-oxobutyl phosphate + formate + H(+). It participates in cofactor biosynthesis; riboflavin biosynthesis; 2-hydroxy-3-oxobutyl phosphate from D-ribulose 5-phosphate: step 1/1. Functionally, catalyzes the conversion of D-ribulose 5-phosphate to formate and 3,4-dihydroxy-2-butanone 4-phosphate. The polypeptide is 3,4-dihydroxy-2-butanone 4-phosphate synthase (Desulfatibacillum aliphaticivorans).